The sequence spans 571 residues: Urease subunit alpha (571 aa).

A Urease domain is found at 129–571 (GGIDTHIHFI…LPMAQRYFLF (443 aa)). Ni(2+) contacts are provided by histidine 134, histidine 136, and lysine 217. Lysine 217 carries the N6-carboxylysine modification. Residue histidine 219 coordinates substrate. 2 residues coordinate Ni(2+): histidine 246 and histidine 272. The active-site Proton donor is histidine 320. Residue aspartate 360 participates in Ni(2+) binding.

This sequence belongs to the metallo-dependent hydrolases superfamily. Urease alpha subunit family. As to quaternary structure, heterotrimer of UreA (gamma), UreB (beta) and UreC (alpha) subunits. Three heterotrimers associate to form the active enzyme. Requires Ni cation as cofactor. Post-translationally, carboxylation allows a single lysine to coordinate two nickel ions.

The protein resides in the cytoplasm. The enzyme catalyses urea + 2 H2O + H(+) = hydrogencarbonate + 2 NH4(+). Its pathway is nitrogen metabolism; urea degradation; CO(2) and NH(3) from urea (urease route): step 1/1. The sequence is that of Urease subunit alpha from Cupriavidus pinatubonensis (strain JMP 134 / LMG 1197) (Cupriavidus necator (strain JMP 134)).